The primary structure comprises 428 residues: Histidine--tRNA ligase (428 aa).

This sequence belongs to the class-II aminoacyl-tRNA synthetase family. In terms of assembly, homodimer.

Its subcellular location is the cytoplasm. It carries out the reaction tRNA(His) + L-histidine + ATP = L-histidyl-tRNA(His) + AMP + diphosphate + H(+). The chain is Histidine--tRNA ligase from Lactobacillus gasseri (strain ATCC 33323 / DSM 20243 / BCRC 14619 / CIP 102991 / JCM 1131 / KCTC 3163 / NCIMB 11718 / NCTC 13722 / AM63).